We begin with the raw amino-acid sequence, 72 residues long: Translational regulator CsrA (72 aa).

This sequence belongs to the CsrA/RsmA family. As to quaternary structure, homodimer; the beta-strands of each monomer intercalate to form a hydrophobic core, while the alpha-helices form wings that extend away from the core.

Its subcellular location is the cytoplasm. A translational regulator that binds mRNA to regulate translation initiation and/or mRNA stability. Usually binds in the 5'-UTR at or near the Shine-Dalgarno sequence preventing ribosome-binding, thus repressing translation. Its main target seems to be the major flagellin gene, while its function is anatagonized by FliW. The polypeptide is Translational regulator CsrA (Clostridium botulinum (strain 657 / Type Ba4)).